We begin with the raw amino-acid sequence, 182 residues long: Adenylate kinase (182 aa).

12–17 provides a ligand contact to ATP; that stretch reads GAGKGT. Residues 32 to 61 are NMP; the sequence is STGDLLRDEVSSGSVLGIKAAEIMNKGELV. Residues T33, R38, 59 to 61, 85 to 88, and Q92 contribute to the AMP site; these read ELV and GFPR. The LID stretch occupies residues 126 to 132; sequence ERGRQDD. R127 contacts ATP. AMP-binding residues include R129 and R140. A168 is an ATP binding site.

This sequence belongs to the adenylate kinase family. In terms of assembly, monomer.

The protein resides in the cytoplasm. The enzyme catalyses AMP + ATP = 2 ADP. The protein operates within purine metabolism; AMP biosynthesis via salvage pathway; AMP from ADP: step 1/1. Functionally, catalyzes the reversible transfer of the terminal phosphate group between ATP and AMP. Plays an important role in cellular energy homeostasis and in adenine nucleotide metabolism. In Prochlorococcus marinus (strain NATL2A), this protein is Adenylate kinase.